We begin with the raw amino-acid sequence, 469 residues long: Dynein axonemal assembly factor 11 (469 aa).

LRR repeat units lie at residues 20–43, 44–65, 66–89, and 90–110; these read IFSL…DKWC, RELK…VSKL, KKLE…GCES, and LQKL…NSLQ. The region spanning 114–135 is the LRRCT domain; sequence HLRELYLVGNPCAEYEGYRQYV. Basic and acidic residues-rich tracts occupy residues 179–213 and 261–286; these read KRAA…RRWY and SRLE…ELKK. Disordered stretches follow at residues 179-290 and 436-469; these read KRAA…KPPR and KTQA…PPLM.

It belongs to the tilB family.

It localises to the cytoplasm. It is found in the cell projection. Its subcellular location is the cilium. The protein localises to the dynein axonemal particle. The protein resides in the flagellum. In terms of biological role, involved in dynein arm assembly, is important for expression and transporting outer dynein arm (ODA) proteins from the cytoplasm to the cilia. The protein is Dynein axonemal assembly factor 11 (dnaaf11) of Xenopus laevis (African clawed frog).